The primary structure comprises 170 residues: NADH-dependent flavin reductase StyB (170 aa).

The protein belongs to the non-flavoprotein flavin reductase family. Homodimer.

It catalyses the reaction a reduced flavin + NAD(+) = an oxidized flavin + NADH + 2 H(+). It functions in the pathway aromatic compound metabolism. Its function is as follows. Reductase component of a two-component system that catalyzes the first step in the aerobic styrene degradation pathway by enantioselective epoxidation of the vinyl side chain. Utilizes NADH to reduce FAD, which is then transferred to the styrene monooxygenase StyA. In Pseudomonas fluorescens, this protein is NADH-dependent flavin reductase StyB (styB).